A 307-amino-acid chain; its full sequence is Putative transcription factor bHLH086 (307 aa).

Disordered regions lie at residues 1–49 (MSLI…DHQN) and 167–215 (HEST…QSLA). 2 stretches are compositionally biased toward polar residues: residues 12–28 (NYIS…SPQN) and 183–197 (GENT…SGTN). The segment at 207–220 (SPKDPQSLAAKNRR) is basic motif. The 50-residue stretch at 207–256 (SPKDPQSLAAKNRRERISERLKVLQELVPNGTKVDLVTMLEKAIGYVKFL) folds into the bHLH domain. Residues 221 to 256 (ERISERLKVLQELVPNGTKVDLVTMLEKAIGYVKFL) are helix-loop-helix motif.

In terms of assembly, homodimer. Forms heterodimers with RHD6. Interacts with TIFY10B/JAZ2, TIFY6A/JAZ4, TIFY5A/JAZ8, TIFY7/JAZ9 and TIFY9/JAZ10.

The protein localises to the nucleus. Transcription factor that is specifically required for the development of root hairs. Acts with RHD6 to positively regulate root hair development. Acts downstream of genes that regulate epidermal pattern formation, such as GL2. Acts with RHD6 as transcription factor that integrates a jasmonate (JA) signaling pathway that stimulates root hair growth. This chain is Putative transcription factor bHLH086, found in Arabidopsis thaliana (Mouse-ear cress).